We begin with the raw amino-acid sequence, 225 residues long: ATP-dependent dethiobiotin synthetase BioD (225 aa).

ATP is bound at residue Glu-15 to Phe-20. Position 19 (Thr-19) interacts with Mg(2+). Lys-40 is a catalytic residue. Residues Asp-57, Glu-118–Gly-121, Asn-178–Arg-179, and Pro-207–Val-209 contribute to the ATP site. 2 residues coordinate Mg(2+): Asp-57 and Glu-118.

It belongs to the dethiobiotin synthetase family. Homodimer. Requires Mg(2+) as cofactor.

The protein resides in the cytoplasm. It carries out the reaction (7R,8S)-7,8-diammoniononanoate + CO2 + ATP = (4R,5S)-dethiobiotin + ADP + phosphate + 3 H(+). The protein operates within cofactor biosynthesis; biotin biosynthesis; biotin from 7,8-diaminononanoate: step 1/2. Functionally, catalyzes a mechanistically unusual reaction, the ATP-dependent insertion of CO2 between the N7 and N8 nitrogen atoms of 7,8-diaminopelargonic acid (DAPA, also called 7,8-diammoniononanoate) to form a ureido ring. The sequence is that of ATP-dependent dethiobiotin synthetase BioD from Aromatoleum aromaticum (strain DSM 19018 / LMG 30748 / EbN1) (Azoarcus sp. (strain EbN1)).